Here is a 407-residue protein sequence, read N- to C-terminus: Accessory Sec system protein translocase subunit SecY2 (407 aa).

A run of 10 helical transmembrane segments spans residues 13–33 (FLWT…TLPF), 65–85 (LFSV…MFAV), 104–124 (MLLT…NLPL), 133–153 (TTIM…LIWL), 158–178 (AAMG…AYIP), 190–210 (ISSL…YLAV), 248–268 (IMYA…IHFL), 287–307 (PAWF…FAFI), 345–365 (FALV…MVVL), and 370–390 (YLRL…VFSI).

Belongs to the SecY/SEC61-alpha family. SecY2 subfamily. As to quaternary structure, component of the accessory SecA2/SecY2 protein translocase complex required to export cell wall proteins. May form heterotrimers with SecE and SecG subunits.

Its subcellular location is the cell membrane. In terms of biological role, part of the accessory SecA2/SecY2 system specifically required for export of possible cell wall proteins. The central subunit of a protein translocation channel. This chain is Accessory Sec system protein translocase subunit SecY2, found in Streptococcus sanguinis (strain SK36).